The following is a 419-amino-acid chain: Elongation factor Tu, chloroplastic (419 aa).

The 205-residue stretch at 10-214 folds into the tr-type G domain; the sequence is KPHVNIGTIG…AVDSYIPTPK (205 aa). Residues 19-26 form a G1 region; it reads GHVDHGKT. 19–26 is a binding site for GTP; that stretch reads GHVDHGKT. Residue Thr26 coordinates Mg(2+). Positions 60–64 are G2; the sequence is GITIN. Residues 81–84 are G3; it reads DCPG. GTP-binding positions include 81–85 and 136–139; these read DCPGH and NKED. The G4 stretch occupies residues 136–139; that stretch reads NKED. The tract at residues 174–176 is G5; it reads SAL.

It belongs to the TRAFAC class translation factor GTPase superfamily. Classic translation factor GTPase family. EF-Tu/EF-1A subfamily.

It is found in the plastid. Its subcellular location is the chloroplast. It catalyses the reaction GTP + H2O = GDP + phosphate + H(+). Its function is as follows. GTP hydrolase that promotes the GTP-dependent binding of aminoacyl-tRNA to the A-site of ribosomes during protein biosynthesis. The sequence is that of Elongation factor Tu, chloroplastic (tufA) from Chara vulgaris (Common stonewort).